Reading from the N-terminus, the 285-residue chain is MESGDLKIFQAVAREGSITKAAQMLNYVQSNVTARVHNLEEDLNIRLFHRTNRGMKLTAAGENLLQYADQVLSLLDQAEKSTRMSRQPKGPLRIGSLETMAVTHLPEHAASFLRRFPEVDLSVNTADTHHLIQQVLDHKVDGAFVYGPVEHAAVRQLHVSHDELVLISSREGTAEDMLQQPMLFFGAGCSHRDRVKRLLEEAGIHNQKIIEFGTLEAIIKGVSAGMGTALLPKSAVDGSEHRTNVWIHQLPPSYQDLEIVFIYRKDFFITSAFQTFLDEINEMKR.

Residues 1–58 (MESGDLKIFQAVAREGSITKAAQMLNYVQSNVTARVHNLEEDLNIRLFHRTNRGMKLT) enclose the HTH lysR-type domain. The segment at residues 18–37 (ITKAAQMLNYVQSNVTARVH) is a DNA-binding region (H-T-H motif).

This sequence belongs to the LysR transcriptional regulatory family.

Its subcellular location is the cytoplasm. Its function is as follows. Regulates expression of the cell division protein ftsW, and is essential for cell viability during stationary phase. The polypeptide is HTH-type transcriptional regulator YofA (yofA) (Bacillus subtilis (strain 168)).